Here is a 179-residue protein sequence, read N- to C-terminus: Transcription factor 21 (179 aa).

The interval 20–86 (CDGIKLDPNK…KQVQRNAANA (67 aa)) is disordered. Positions 34-46 (SNDSNEESSTCDN) are enriched in polar residues. Residues 50 to 64 (KKGRGTSGKRRKASS) are compositionally biased toward basic residues. Positions 70-80 (GTINQEGKQVQ) are enriched in polar residues. The bHLH domain occupies 79 to 131 (VQRNAANARERARMRVLSKAFSRLKTTLPWVPPDTKLSKLDTLRLASSYIAHL).

Efficient DNA binding requires dimerization with another bHLH protein. As to expression, at the start of neurulation (stage 13), expressed in the pronephros. At tailbud stage (stage 25-28), expression is high in the anterior-most branchial arch and pronephric glomus. At stage 40, staining persists in the glomus and in the epicardium region of the heart, and at stage 42, expression is higher in the glomus than in the kidney tubule or duct. In adults, expression is highest in the rectum and the spleen, with significant expression in the duodenum, heart, kidney, lungs, pancreas, skin, liver and muscle.

Its subcellular location is the nucleus. Involved in epithelial-mesenchymal interactions in kidney and lung morphogenesis that include epithelial differentiation and branching morphogenesis. The sequence is that of Transcription factor 21 (tcf21) from Xenopus laevis (African clawed frog).